The primary structure comprises 409 residues: tRNA(Met) cytidine acetate ligase (409 aa).

Residues 7–20, Gly102, Asn169, and Arg194 contribute to the ATP site; that span reads VVEY…HLYH.

Belongs to the TmcAL family.

The protein resides in the cytoplasm. It catalyses the reaction cytidine(34) in elongator tRNA(Met) + acetate + ATP = N(4)-acetylcytidine(34) in elongator tRNA(Met) + AMP + diphosphate. Catalyzes the formation of N(4)-acetylcytidine (ac(4)C) at the wobble position of elongator tRNA(Met), using acetate and ATP as substrates. First activates an acetate ion to form acetyladenylate (Ac-AMP) and then transfers the acetyl group to tRNA to form ac(4)C34. The polypeptide is tRNA(Met) cytidine acetate ligase (Clostridium botulinum (strain Okra / Type B1)).